A 981-amino-acid chain; its full sequence is Amidohydrolase tasK (981 aa).

The interval 1–36 (MDDQKGPLPPYTPTATAPPPASMRQRRPPGRRRALR) is disordered. Residues 7–21 (PLPPYTPTATAPPPA) are compositionally biased toward pro residues. Residues 24–36 (RQRRPPGRRRALR) show a composition bias toward basic residues. The helical transmembrane segment at 40–57 (TVRVLALACLAFVVLAQW) threads the bilayer. A disordered region spans residues 86-107 (LRVRPQDPAGPGRSKNDRYLDG). Fe(2+) contacts are provided by His187 and His189. Zn(2+)-binding residues include His187 and His189. An N-linked (GlcNAc...) asparagine glycan is attached at Asn407. The segment at 819 to 838 (KKQQKQQQQQQQQQQQQHGT) is disordered. The span at 823–835 (KQQQQQQQQQQQQ) shows a compositional bias: low complexity. N-linked (GlcNAc...) asparagine glycosylation is present at Asn891.

It belongs to the metallo-dependent hydrolases superfamily. Fe(2+) is required as a cofactor. The cofactor is Mn(2+). It depends on Zn(2+) as a cofactor.

The protein resides in the membrane. Amidohydrolase; part of the gene cluster that mediates the biosynthesis of the tetramic acids Sch210971 and Sch210972, potential anti-HIV fungal natural product that contain a decalin core. The PKS module of tasS together with the enoylreductase tasC catalyze the formation of the polyketide unit which is then conjugated to 4-hydroxyl-4-methyl glutamate (HMG) by the condensation domain of the tasS NRPS module. One unique structural feature of Sch210971 and Sch210972 is the tetramic acid motif proposed to be derived from the non-proteinogenic amino acid HMG, by a Dieckmann-type condensation catalyzed by the reductase domain of tasS. The aldolase tasA catalyzes the aldol condensation of 2 molecules of pyruvic acid to yield the intermediate 4-hydroxyl-4-methyl-2-oxoglutarate (HMOG), which can then be stereoselectively transaminated, may be by tasG, to form HMG. The Diels-Alderase tas3 then uses the Dieckmann product of tasS as substrate and catalyzes the Diels-Alder cycloaddition to form the decalin ring of Sch210971 and Sch210972. In Hapsidospora irregularis, this protein is Amidohydrolase tasK.